Reading from the N-terminus, the 257-residue chain is Zinc-finger homeodomain protein 6 (257 aa).

Residues 1–35 are disordered; that stretch reads MEFRGHDEPVDEMGVAYGRTPPSSSSSPAASASAG. Positions 21–35 are enriched in low complexity; that stretch reads PPSSSSSPAASASAG. The segment at 45–93 adopts a ZF-HD dimerization-type; degenerate zinc-finger fold; sequence YHECLRNHAAAMGGHVVDGCGEFMPMPGDAADALKCAACGCHRSFHRKD. Over residues 106–125 the composition is skewed to pro residues; it reads PSPPTPRVPLLMPPPQPQPH. 2 disordered regions span residues 106–182 and 228–257; these read PSPP…TKFT and NNKS…QQQQ. Residues 141–155 are compositionally biased toward low complexity; the sequence is YHHTPSGSGGTTTES. Positions 174–237 form a DNA-binding region, homeobox; it reads RKRFRTKFTP…NNKSSIGSSS (64 aa). Residues 242 to 257 are compositionally biased toward low complexity; sequence RRQPQEQQSQQQQQQQ.

As to quaternary structure, homo- and heterodimer with other ZFHD proteins.

The protein resides in the nucleus. Its function is as follows. Putative transcription factor. This Oryza sativa subsp. indica (Rice) protein is Zinc-finger homeodomain protein 6 (ZHD6).